The chain runs to 252 residues: Chitooligosaccharide deacetylase (252 aa).

Positions 61 and 125 each coordinate Mg(2+).

It belongs to the YdjC deacetylase family. ChbG subfamily. In terms of assembly, homodimer. Mg(2+) is required as a cofactor.

The protein resides in the cytoplasm. The catalysed reaction is N,N'-diacetylchitobiose + H2O = N-acetyl-beta-D-glucosaminyl-(1-&gt;4)-D-glucosamine + acetate. It carries out the reaction diacetylchitobiose-6'-phosphate + H2O = N'-monoacetylchitobiose-6'-phosphate + acetate. It functions in the pathway glycan degradation; chitin degradation. Its function is as follows. Involved in the degradation of chitin. ChbG is essential for growth on the acetylated chitooligosaccharides chitobiose and chitotriose but is dispensable for growth on cellobiose and chitosan dimer, the deacetylated form of chitobiose. Deacetylation of chitobiose-6-P and chitotriose-6-P is necessary for both the activation of the chb promoter by the regulatory protein ChbR and the hydrolysis of phosphorylated beta-glucosides by the phospho-beta-glucosidase ChbF. Catalyzes the removal of only one acetyl group from chitobiose-6-P to yield monoacetylchitobiose-6-P, the inducer of ChbR and the substrate of ChbF. The sequence is that of Chitooligosaccharide deacetylase from Salmonella newport (strain SL254).